We begin with the raw amino-acid sequence, 530 residues long: Light-independent protochlorophyllide reductase subunit B (530 aa).

[4Fe-4S] cluster is bound at residue Asp36. Asp290 acts as the Proton donor in catalysis. A substrate-binding site is contributed by Gly425–Leu426. The disordered stretch occupies residues Leu448–Ser483. The segment covering Thr458–Ser473 has biased composition (polar residues).

It belongs to the ChlB/BchB/BchZ family. Protochlorophyllide reductase is composed of three subunits; ChlL, ChlN and ChlB. Forms a heterotetramer of two ChlB and two ChlN subunits. [4Fe-4S] cluster serves as cofactor.

The enzyme catalyses chlorophyllide a + oxidized 2[4Fe-4S]-[ferredoxin] + 2 ADP + 2 phosphate = protochlorophyllide a + reduced 2[4Fe-4S]-[ferredoxin] + 2 ATP + 2 H2O. It functions in the pathway porphyrin-containing compound metabolism; chlorophyll biosynthesis (light-independent). In terms of biological role, component of the dark-operative protochlorophyllide reductase (DPOR) that uses Mg-ATP and reduced ferredoxin to reduce ring D of protochlorophyllide (Pchlide) to form chlorophyllide a (Chlide). This reaction is light-independent. The NB-protein (ChlN-ChlB) is the catalytic component of the complex. This is Light-independent protochlorophyllide reductase subunit B from Prochlorococcus marinus (strain SARG / CCMP1375 / SS120).